The sequence spans 139 residues: Large-conductance mechanosensitive channel (139 aa).

A run of 2 helical transmembrane segments spans residues Val-16–Leu-36 and Gly-79–Val-99.

Belongs to the MscL family. In terms of assembly, homopentamer.

The protein resides in the cell inner membrane. In terms of biological role, channel that opens in response to stretch forces in the membrane lipid bilayer. May participate in the regulation of osmotic pressure changes within the cell. This chain is Large-conductance mechanosensitive channel, found in Caulobacter vibrioides (strain ATCC 19089 / CIP 103742 / CB 15) (Caulobacter crescentus).